The chain runs to 249 residues: Inhibitor of growth protein 4 (249 aa).

Residues 25-118 (FQLMRDLDQR…ADLKEKQIES (94 aa)) are a coiled coil. The tract at residues 115–160 (QIESSDYDSSSSKGKKKGRAQKEKKAARARSKGKNSDEEAPKTAQK) is disordered. The PHD-type zinc finger occupies 196–245 (PTYCLCHQVSYGEMIGCDNPDCSIEWFHFACVGLTTKPRGKWFCPRCSQE). The Zn(2+) site is built by C199, C201, C212, C217, H223, C226, C239, and C242.

It belongs to the ING family. In terms of assembly, homodimer. Component of the HBO1 complex.

Its subcellular location is the nucleus. Component of HBO1 complexes, which specifically mediate acetylation of histone H3 at 'Lys-14' (H3K14ac), and have reduced activity toward histone H4. Through chromatin acetylation it may function in DNA replication. In Gallus gallus (Chicken), this protein is Inhibitor of growth protein 4 (ING4).